The chain runs to 367 residues: Folliculin-like protein bhd1 (367 aa).

Disordered stretches follow at residues 41–75 (RSIG…QSST) and 92–115 (SKGP…SPIS). Over residues 54 to 64 (EAFKNELDNRN) the composition is skewed to basic and acidic residues. Composition is skewed to polar residues over residues 65–75 (NADSQSLQSST) and 99–115 (RVNS…SPIS). Residues 131-302 (FSVPDVQPRL…SNIGTAPSYE (172 aa)) enclose the uDENN FLCN/SMCR8-type domain.

The protein belongs to the folliculin family.

The protein localises to the nucleus. It is found in the cytoplasm. This is Folliculin-like protein bhd1 (bhd1) from Schizosaccharomyces pombe (strain 972 / ATCC 24843) (Fission yeast).